A 601-amino-acid polypeptide reads, in one-letter code: 4-hydroxy-3-methylbut-2-en-1-yl diphosphate synthase (flavodoxin) (601 aa).

Positions 507, 510, 542, and 549 each coordinate [4Fe-4S] cluster.

This sequence belongs to the IspG family. [4Fe-4S] cluster serves as cofactor.

It carries out the reaction (2E)-4-hydroxy-3-methylbut-2-enyl diphosphate + oxidized [flavodoxin] + H2O + 2 H(+) = 2-C-methyl-D-erythritol 2,4-cyclic diphosphate + reduced [flavodoxin]. It participates in isoprenoid biosynthesis; isopentenyl diphosphate biosynthesis via DXP pathway; isopentenyl diphosphate from 1-deoxy-D-xylulose 5-phosphate: step 5/6. In terms of biological role, converts 2C-methyl-D-erythritol 2,4-cyclodiphosphate (ME-2,4cPP) into 1-hydroxy-2-methyl-2-(E)-butenyl 4-diphosphate. The chain is 4-hydroxy-3-methylbut-2-en-1-yl diphosphate synthase (flavodoxin) from Chlamydia muridarum (strain MoPn / Nigg).